Here is a 149-residue protein sequence, read N- to C-terminus: Prefoldin subunit alpha (149 aa).

It belongs to the prefoldin alpha subunit family. As to quaternary structure, heterohexamer of two alpha and four beta subunits.

The protein resides in the cytoplasm. Functionally, molecular chaperone capable of stabilizing a range of proteins. Seems to fulfill an ATP-independent, HSP70-like function in archaeal de novo protein folding. The sequence is that of Prefoldin subunit alpha from Methanoculleus marisnigri (strain ATCC 35101 / DSM 1498 / JR1).